Here is an 88-residue protein sequence, read N- to C-terminus: Small ribosomal subunit protein bS16 (88 aa).

It belongs to the bacterial ribosomal protein bS16 family.

In Anaeromyxobacter sp. (strain Fw109-5), this protein is Small ribosomal subunit protein bS16.